A 180-amino-acid chain; its full sequence is Large ribosomal subunit protein uL5c (180 aa).

The protein belongs to the universal ribosomal protein uL5 family. As to quaternary structure, part of the 50S ribosomal subunit; contacts the 5S rRNA.

Its subcellular location is the plastid. It is found in the chloroplast. Its function is as follows. Binds 5S rRNA, forms part of the central protuberance of the 50S subunit. The polypeptide is Large ribosomal subunit protein uL5c (rpl5) (Chlorella vulgaris (Green alga)).